We begin with the raw amino-acid sequence, 345 residues long: Methylthioribose-1-phosphate isomerase (345 aa).

Residues 47-49 (RGA), R90, and Q197 contribute to the substrate site. The active-site Proton donor is the D238. 248-249 (NK) is a substrate binding site.

It belongs to the eIF-2B alpha/beta/delta subunits family. MtnA subfamily.

It carries out the reaction 5-(methylsulfanyl)-alpha-D-ribose 1-phosphate = 5-(methylsulfanyl)-D-ribulose 1-phosphate. The protein operates within amino-acid biosynthesis; L-methionine biosynthesis via salvage pathway; L-methionine from S-methyl-5-thio-alpha-D-ribose 1-phosphate: step 1/6. Its function is as follows. Catalyzes the interconversion of methylthioribose-1-phosphate (MTR-1-P) into methylthioribulose-1-phosphate (MTRu-1-P). The protein is Methylthioribose-1-phosphate isomerase of Caldanaerobacter subterraneus subsp. tengcongensis (strain DSM 15242 / JCM 11007 / NBRC 100824 / MB4) (Thermoanaerobacter tengcongensis).